The sequence spans 804 residues: Leucine--tRNA ligase (804 aa).

Positions 39 to 50 (PYPSGAGLHVGH) match the 'HIGH' region motif. The 'KMSKS' region signature appears at 580–584 (KMSKS). Lysine 583 contributes to the ATP binding site.

It belongs to the class-I aminoacyl-tRNA synthetase family.

The protein resides in the cytoplasm. The catalysed reaction is tRNA(Leu) + L-leucine + ATP = L-leucyl-tRNA(Leu) + AMP + diphosphate. The sequence is that of Leucine--tRNA ligase from Mycoplasma capricolum subsp. capricolum (strain California kid / ATCC 27343 / NCTC 10154).